We begin with the raw amino-acid sequence, 98 residues long: Integration host factor subunit alpha (98 aa).

Positions Phe49–Asp70 are disordered.

This sequence belongs to the bacterial histone-like protein family. In terms of assembly, heterodimer of an alpha and a beta chain.

This protein is one of the two subunits of integration host factor, a specific DNA-binding protein that functions in genetic recombination as well as in transcriptional and translational control. In Serratia proteamaculans (strain 568), this protein is Integration host factor subunit alpha.